Here is a 116-residue protein sequence, read N- to C-terminus: Large ribosomal subunit protein bL17 (116 aa).

Belongs to the bacterial ribosomal protein bL17 family. As to quaternary structure, part of the 50S ribosomal subunit. Contacts protein L32.

The chain is Large ribosomal subunit protein bL17 from Prochlorococcus marinus (strain MIT 9515).